A 412-amino-acid chain; its full sequence is Multidrug resistance protein MdtG (412 aa).

The next 11 helical transmembrane spans lie at 19–39, 56–76, 90–110, 113–133, 144–164, 171–191, 222–242, 254–274, 288–308, 317–337, and 376–396; these read LGCF…PLYV, LVFS…GGLA, LGMS…QFLL, ALLG…ATQI, TLST…GFLA, TVFF…LFLI, LFVT…ILTL, IAFI…MSAP, ILIV…FVQT, FLLG…LVYN, and AVFL…TLSL.

It belongs to the major facilitator superfamily. DHA1 family. MdtG (TC 2.A.1.2.20) subfamily.

The protein resides in the cell inner membrane. The sequence is that of Multidrug resistance protein MdtG from Klebsiella pneumoniae (strain 342).